The sequence spans 239 residues: Uridylate kinase (239 aa).

Lysine 12–glycine 15 provides a ligand contact to ATP. UMP is bound at residue glycine 54. Positions 55 and 59 each coordinate ATP. Residues aspartate 74 and threonine 135–threonine 142 contribute to the UMP site. Residues threonine 162, tyrosine 168, and aspartate 171 each contribute to the ATP site.

The protein belongs to the UMP kinase family. As to quaternary structure, homohexamer.

Its subcellular location is the cytoplasm. The catalysed reaction is UMP + ATP = UDP + ADP. It participates in pyrimidine metabolism; CTP biosynthesis via de novo pathway; UDP from UMP (UMPK route): step 1/1. Its activity is regulated as follows. Inhibited by UTP. Catalyzes the reversible phosphorylation of UMP to UDP. The sequence is that of Uridylate kinase from Fusobacterium nucleatum subsp. nucleatum (strain ATCC 25586 / DSM 15643 / BCRC 10681 / CIP 101130 / JCM 8532 / KCTC 2640 / LMG 13131 / VPI 4355).